The primary structure comprises 269 residues: Eukaryotic translation initiation factor 3 subunit G-1 (269 aa).

Residues 188 to 266 (AAIRISNLSE…LILSVEWSKP (79 aa)) enclose the RRM domain.

This sequence belongs to the eIF-3 subunit G family. In terms of assembly, component of the eukaryotic translation initiation factor 3 (eIF-3) complex. The eIF-3 complex interacts with pix.

Its subcellular location is the cytoplasm. Its function is as follows. RNA-binding component of the eukaryotic translation initiation factor 3 (eIF-3) complex, which is involved in protein synthesis of a specialized repertoire of mRNAs and, together with other initiation factors, stimulates binding of mRNA and methionyl-tRNAi to the 40S ribosome. The eIF-3 complex specifically targets and initiates translation of a subset of mRNAs involved in cell proliferation. This subunit can bind 18S rRNA. The polypeptide is Eukaryotic translation initiation factor 3 subunit G-1 (Drosophila grimshawi (Hawaiian fruit fly)).